The following is a 154-amino-acid chain: Transcriptional regulator MraZ (154 aa).

2 SpoVT-AbrB domains span residues 6 to 53 (NSEA…PENV) and 83 to 126 (VEVI…SKEI).

The protein belongs to the MraZ family. Forms oligomers.

It is found in the cytoplasm. The protein localises to the nucleoid. The protein is Transcriptional regulator MraZ of Phocaeicola vulgatus (strain ATCC 8482 / DSM 1447 / JCM 5826 / CCUG 4940 / NBRC 14291 / NCTC 11154) (Bacteroides vulgatus).